The primary structure comprises 368 residues: MADFVNASIFGTLFQITSRYVNLEPVGMGAFGLVCSAKDQLTSSPVAIKKIMKPFSTPVLSKRTYRELKLLKHIRHENIISLSDIFISPSEDIYFVTELLGTDLHRLLTARPLEKQFIQYFLYQILRGLKYVHSAGVVHRDLKPSNILVNENCDLKICDFGLARIQDPQMTGYVSTRYYRAPEIMLTWQKYDVAVDIWSTGCIFAEMLEGKPLFPGKDHVNQFSIITELLGTPPDDVIQTICSENTLRFVQSLPKKPRIPFNEKFKTNDPLALDLVEKMLSFDPRTRITASQALAHPYLAPYHDPNDEPVAAEQFDWSFNDADLPIDTWKVMMYSEILDFHHISQDGDQFLNANGPGTEQASDSSFTV.

Residues 20–299 (YVNLEPVGMG…ASQALAHPYL (280 aa)) form the Protein kinase domain. ATP contacts are provided by residues 26 to 34 (VGMGAFGLV) and lysine 49. Aspartate 141 (proton acceptor) is an active-site residue. Threonine 171 bears the Phosphothreonine mark. The TXY motif lies at 171-173 (TGY). Phosphotyrosine is present on tyrosine 173.

Belongs to the protein kinase superfamily. Ser/Thr protein kinase family. MAP kinase subfamily. HOG1 sub-subfamily. Requires Mg(2+) as cofactor. In terms of processing, phosphorylated. Dually phosphorylated on Thr-171 and Tyr-173, which activates the enzyme. Rapidly dephosphorylated upon either hypo- or hyperosmotic shock.

It localises to the cytoplasm. Its subcellular location is the nucleus. It catalyses the reaction L-seryl-[protein] + ATP = O-phospho-L-seryl-[protein] + ADP + H(+). The enzyme catalyses L-threonyl-[protein] + ATP = O-phospho-L-threonyl-[protein] + ADP + H(+). Activated by tyrosine and threonine phosphorylation. Its function is as follows. Mitogen-activated protein kinase involved in a signal transduction pathway that is activated by changes in the osmolarity of the extracellular environment. Controls osmotic regulation of transcription of target genes. This chain is Mitogen-activated protein kinase HOG1B (HOG1B), found in Wallemia ichthyophaga (strain EXF-994 / CBS 113033).